Consider the following 197-residue polypeptide: Elongation factor Ts (197 aa).

The tract at residues 81–84 is involved in Mg(2+) ion dislocation from EF-Tu; that stretch reads TDFV.

It belongs to the EF-Ts family.

It localises to the cytoplasm. Its function is as follows. Associates with the EF-Tu.GDP complex and induces the exchange of GDP to GTP. It remains bound to the aminoacyl-tRNA.EF-Tu.GTP complex up to the GTP hydrolysis stage on the ribosome. This chain is Elongation factor Ts, found in Fervidobacterium nodosum (strain ATCC 35602 / DSM 5306 / Rt17-B1).